Consider the following 268-residue polypeptide: Enoyl-[acyl-carrier-protein] reductase [NADH] 2 (268 aa).

NAD(+) contacts are provided by residues G14, 20–21 (SI), Q41, 65–66 (DV), and I93. Catalysis depends on proton acceptor residues Y146 and Y156. NAD(+) contacts are provided by residues K163 and 192–196 (IRTLA).

Belongs to the short-chain dehydrogenases/reductases (SDR) family. FabI subfamily.

The protein localises to the cell inner membrane. It carries out the reaction a 2,3-saturated acyl-[ACP] + NAD(+) = a (2E)-enoyl-[ACP] + NADH + H(+). It functions in the pathway lipid metabolism; fatty acid biosynthesis. This chain is Enoyl-[acyl-carrier-protein] reductase [NADH] 2 (fabI2), found in Rhizobium meliloti (strain 1021) (Ensifer meliloti).